A 215-amino-acid polypeptide reads, in one-letter code: Thymidylate kinase (215 aa).

11–18 (GIDGAGKS) is an ATP binding site.

This sequence belongs to the thymidylate kinase family.

The enzyme catalyses dTMP + ATP = dTDP + ADP. Phosphorylation of dTMP to form dTDP in both de novo and salvage pathways of dTTP synthesis. This Nitrosomonas eutropha (strain DSM 101675 / C91 / Nm57) protein is Thymidylate kinase.